Consider the following 636-residue polypeptide: MLDFFTIFSKGGLVLWCFQGVSDSCTGPVNALIRSVLLQERGGNNSFTHEALTLKYKLDNQFELVFVVGFQKILTLTYVDKLIDDVHRLFRDKYRTEIQQQSALSLLNGTFDFQNDFLRLLREAEESSKIRAPTTMKKFEDSEKAKKPVRSMIETRGEKTKEKAKNNKKRGAKKEGSDGTLATSKTAPAEKSGLSAGPENGELSKEELIRRKREEFIQKHGKGLDKSSKSTKSDTPKEKGKKAPRVWELGGCANKEVLDYSTPTTNGTPEAALSEDINLIRGTGPGGQLQDLDCSSSDDEGATQNTKPSATKGTLGGMFGMLKGLVGSKSLSREDMESVLDKMRDHLIAKNVAADIAVQLCESVANKLEGKVMGTFSTVTSTVKQALQESLVQILQPQRRVDMLRDIMDAQRRQRPYVVTFCGVNGVGKSTNLAKISFWLLENGFSVLIAACDTFRAGAVEQLRTHTRRLTALHPPEKHGGRTMVQLFEKGYGKDAAGIAMEAIAFARNQGFDVVLVDTAGRMQDNAPLMTALAKLITVNTPDLVLFVGEALVGNEAVDQLVKFNRALADHSMAQTPRLIDGIVLTKFDTIDDKVGAAISMTYITSKPIVFVGTGQTYCDLRSLNAKAVVAALMKA.

Disordered regions lie at residues 132–205, 217–246, and 280–314; these read APTT…ELSK, IQKH…APRV, and IRGT…TKGT. 2 stretches are compositionally biased toward basic and acidic residues: residues 137–146 and 153–165; these read KKFEDSEKAK and IETR…EKAK. Position 177 is a phosphoserine (serine 177). The span at 217–238 shows a compositional bias: basic and acidic residues; that stretch reads IQKHGKGLDKSSKSTKSDTPKE. Threonine 283 bears the Phosphothreonine mark. 3 positions are modified to phosphoserine: serine 295, serine 296, and serine 297. Positions 302–312 are enriched in polar residues; it reads ATQNTKPSATK. Threonine 303 carries the phosphothreonine modification. The tract at residues 417–634 is NG domain; the sequence is YVVTFCGVNG…NAKAVVAALM (218 aa). Residues 423–430 and 518–522 contribute to the GTP site; these read GVNGVGKS and DTAGR. Phosphothreonine is present on threonine 576. Residue 586–589 coordinates GTP; sequence TKFD.

It belongs to the GTP-binding SRP family. Heterodimer with SRPRB. Interacts with the signal recognition particle (SRP) complex subunit SRP54.

Its subcellular location is the endoplasmic reticulum membrane. Functionally, component of the SRP (signal recognition particle) receptor. Ensures, in conjunction with the signal recognition particle, the correct targeting of the nascent secretory proteins to the endoplasmic reticulum membrane system. Forms a guanosine 5'-triphosphate (GTP)-dependent complex with the SRP subunit SRP54. SRP receptor compaction and GTPase rearrangement drive SRP-mediated cotranslational protein translocation into the ER. The protein is Signal recognition particle receptor subunit alpha of Mus musculus (Mouse).